The primary structure comprises 228 residues: Sodium channel regulatory subunit beta-4 (228 aa).

The signal sequence occupies residues 1–30 (MSRAGNRGNTQARWLGIGLLGLFLLPMYLS). The region spanning 31–148 (LEVSVGKATT…KDLNNSATIF (118 aa)) is the Ig-like C2-type domain. The Extracellular portion of the chain corresponds to 31–161 (LEVSVGKATT…VDKLEEVDNT (131 aa)). N-linked (GlcNAc...) asparagine glycosylation is found at Asn45, Asn71, Asn113, and Asn142. The cysteines at positions 53 and 131 are disulfide-linked. A helical membrane pass occupies residues 162–182 (VTLIILAVVGGVIGLLVCILL). Topologically, residues 183 to 228 (LKKLITFILKKTREKKKECLVSSSGNDNTENGLPGSKAEEKPPTKV) are cytoplasmic. Residues 199-228 (KECLVSSSGNDNTENGLPGSKAEEKPPTKV) are disordered. Residues 203-213 (VSSSGNDNTEN) are compositionally biased toward polar residues. A compositionally biased stretch (basic and acidic residues) spans 219–228 (KAEEKPPTKV).

Belongs to the sodium channel auxiliary subunit SCN4B (TC 8.A.17) family. A voltage-gated sodium (Nav) channel consists of an ion-conducting pore-forming alpha subunit functional on its own that is regulated by one or more beta subunits. The beta subunit SCN4B is disulfide-linked to the pore-forming alpha subunit. Interacts with SCN1A; regulatory subunit of SCN1A/Nav1.1. Interacts with SCN2A; regulatory subunit of SCN2A/Nav1.2. Post-translationally, contains an interchain disulfide bond with SCN2A. In terms of tissue distribution, expressed at a high level in dorsal root ganglia, at a lower level in brain, spinal cord, skeletal muscle and heart.

The protein localises to the cell membrane. Its function is as follows. Regulatory subunit of multiple voltage-gated sodium (Nav) channels directly mediating the depolarization of excitable membranes. Navs, also called VGSCs (voltage-gated sodium channels) or VDSCs (voltage-dependent sodium channels), operate by switching between closed and open conformations depending on the voltage difference across the membrane. In the open conformation they allow Na(+) ions to selectively pass through the pore, along their electrochemical gradient. The influx of Na+ ions provokes membrane depolarization, initiating the propagation of electrical signals throughout cells and tissues. The accessory beta subunits participate in localization and functional modulation of the Nav channels. Modulates the activity of SCN1A/Nav1.1. Modulates the activity of SCN2A/Nav1.2. The chain is Sodium channel regulatory subunit beta-4 from Rattus norvegicus (Rat).